Here is a 292-residue protein sequence, read N- to C-terminus: 33 kDa chaperonin (292 aa).

Intrachain disulfides connect Cys-230–Cys-232 and Cys-263–Cys-266.

The protein belongs to the HSP33 family. In terms of processing, under oxidizing conditions two disulfide bonds are formed involving the reactive cysteines. Under reducing conditions zinc is bound to the reactive cysteines and the protein is inactive.

It is found in the cytoplasm. Functionally, redox regulated molecular chaperone. Protects both thermally unfolding and oxidatively damaged proteins from irreversible aggregation. Plays an important role in the bacterial defense system toward oxidative stress. The sequence is that of 33 kDa chaperonin from Salmonella paratyphi A (strain ATCC 9150 / SARB42).